Reading from the N-terminus, the 62-residue chain is MARKCVVTGRQTRSGNQRSHAMNSNKRNWKANVQKVRIMVDGKPKKVYVSARALKSGKVERV.

The disordered stretch occupies residues 1 to 27; it reads MARKCVVTGRQTRSGNQRSHAMNSNKR. The span at 9 to 26 shows a compositional bias: polar residues; sequence GRQTRSGNQRSHAMNSNK.

Belongs to the bacterial ribosomal protein bL28 family.

The polypeptide is Large ribosomal subunit protein bL28 (Oceanobacillus iheyensis (strain DSM 14371 / CIP 107618 / JCM 11309 / KCTC 3954 / HTE831)).